The primary structure comprises 520 residues: MSAIAIIDFGSQFTQLIARQVRGMGVYCEIFPSNISFETISKFNGFILSGGPQSVNDDCSETSRVVHEIIKLNEATSVPILGICYGQQLICHYFGAKVKESFKQEFGRTKIKILKESPIVKDTWDVNSEVDVLMNHADSVDTIPQGFTVIASGVINQTIAMIVNEQRKIYCTQFHPEVKPTTNGSKLLSNFLDIANCKRDWTMKSFIEEQKEKIKNVVGEKKVIAAVSGGVDSSVAAALTHKAIGKQLNCIFIDTGLLRKNQTIAMLKEIPINYVDKSNLFLSRLKGITDPEEKRKIIGNTFIEVFEEEAKKIGDVDFLMQGTIYSDVVESGHASDNTSTIKSHHNVGGLPEKMNLKLVEPLRYLFKDEVRLLGKEIGLSDEIIFQHPFPGPGLAVRIISEVDKEKVQILQEVDEIYINTMKNYDLYDKIWQAFAVLLPIKTVGVMGDGRTYGYVCALRAVTSSDGMTADAFPFEDKDQHLLVFWDFLRNVGSIIVNNVPGVNRVVYDITSKPPATIEWE.

Positions 3-200 constitute a Glutamine amidotransferase type-1 domain; the sequence is AIAIIDFGSQ…FLDIANCKRD (198 aa). The active-site Nucleophile is the Cys84. Catalysis depends on residues His175 and Glu177. The 186-residue stretch at 201-386 folds into the GMPS ATP-PPase domain; it reads WTMKSFIEEQ…IGLSDEIIFQ (186 aa). 228-234 contacts ATP; the sequence is SGGVDSS.

As to quaternary structure, homodimer.

It catalyses the reaction XMP + L-glutamine + ATP + H2O = GMP + L-glutamate + AMP + diphosphate + 2 H(+). It functions in the pathway purine metabolism; GMP biosynthesis; GMP from XMP (L-Gln route): step 1/1. Functionally, catalyzes the synthesis of GMP from XMP. This Wolbachia pipientis wMel protein is GMP synthase [glutamine-hydrolyzing].